A 107-amino-acid chain; its full sequence is U1-lycotoxin-Ls1i (107 aa).

The N-terminal stretch at Met1 to Ser20 is a signal peptide. A propeptide spanning residues Glu21–Arg41 is cleaved from the precursor. 4 cysteine pairs are disulfide-bonded: Cys44–Cys59, Cys51–Cys68, Cys58–Cys86, and Cys70–Cys84.

This sequence belongs to the neurotoxin 19 (CSTX) family. 04 (U1-Lctx) subfamily. In terms of tissue distribution, expressed by the venom gland.

Its subcellular location is the secreted. The polypeptide is U1-lycotoxin-Ls1i (Lycosa singoriensis (Wolf spider)).